The sequence spans 204 residues: Ribonuclease HII (204 aa).

The RNase H type-2 domain maps to 1 to 197 (MILGIDEAGR…KNRILNPKLL (197 aa)). Residues Asp6, Glu7, and Asp103 each contribute to the a divalent metal cation site.

Belongs to the RNase HII family. Requires Mn(2+) as cofactor. The cofactor is Mg(2+).

The protein resides in the cytoplasm. The enzyme catalyses Endonucleolytic cleavage to 5'-phosphomonoester.. Endonuclease that specifically degrades the RNA of RNA-DNA hybrids. The sequence is that of Ribonuclease HII from Helicobacter pylori (strain G27).